The sequence spans 1178 residues: Pesticidal crystal protein Cry1Ac (1178 aa).

The protein belongs to the delta endotoxin family.

In terms of biological role, promotes colloidosmotic lysis by binding to the midgut epithelial cells of many lepidopteran larvae. The protein is Pesticidal crystal protein Cry1Ac (cry1Ac) of Bacillus thuringiensis subsp. kurstaki.